We begin with the raw amino-acid sequence, 218 residues long: DNA ADP-ribosyl transferase (218 aa).

The DarT domain occupies 14-217 (ALIWRIVHRD…SVHTRSGWYF (204 aa)). NAD(+) is bound by residues 18 to 20 (RIV) and Arg57. The NAD(+)-binding element stretch occupies residues 41 to 59 (QAENWINIGNPELIGKRAG). Residue Arg57 is the Proton acceptor of the active site. The tract at residues 123-170 (TDSHAYYNWTNYYTSLNSLDQIDWPILQARDFRRDPDDPAKFERYQAE) is ADP-ribosylating turn-turn loop. The active site involves Glu170.

Belongs to the DarT ADP-ribosyltransferase family. Interacts with cognate antitoxin DarG (via C-terminus); this heterodimeric complex neutralizes the toxic effect of DarT by preventing ssDNA binding to DarT and consequently inactivating the toxin by direct protein-protein interactions.

It catalyses the reaction a thymidine in DNA + NAD(+) = an N-(ADP-alpha-D-ribosyl)-thymidine in DNA + nicotinamide + H(+). Its function is as follows. Toxic component of the hybrid type II/IV toxin-antitoxin (TA) system DarTG, which plays a crucial role in controlling bacterial growth and bacteriophage infection. ADP-ribosylates ssDNA in the sequence TTT/TCT. In case of phage infection, DarT toxin ADP-ribosylates DNA, which inhibits both viral DNA and RNA synthesis and leads to abortive infection. Its toxic effect is neutralized by cognate antitoxin DarG. May target ssDNA loops during DNA replication, probably modifies thymidine. Wild-type protein cannot be expressed at low levels in the absence of its cognate antitoxin, but a mutant protein (G49D) can be expressed, which slows growth, rapidly inhibits DNA replication, and induces RecA expression and the SOS response. The slow growth phenotype can be suppressed by cognate antitoxin DarG. Has no activity on dsDNA in vitro. In vivo ADP-ribosylates genomic DNA (gDNA). Genetic data strongly suggests ADP-ribosylation by DarT probably generates ssDNA gaps that are repaired by the RecFOR-mediated homologous recombination pathway (RuvAB, RecG) and resolved by RuvC. In some cases these gaps probably migrate into dsDNA, where they are resolved by nucleotide excision repair (NER) detected by UvrAB, excised by UvrC, removed by UvrD, and repaired by Pol I and ligase. Other pathways may also be involved in ADP-ribosylation removal from DNA. This is DNA ADP-ribosyl transferase from Escherichia coli O127:H6 (strain E2348/69 / EPEC).